The chain runs to 605 residues: F-box/WD repeat-containing protein 1A (605 aa).

Residues 128-177 (ASYEKEKELCVKYFEQWSESDQVEFVEHLISQMCHYQHGHINSYLKPMLQ) are homodimerization domain D. In terms of domain architecture, F-box spans 182-228 (TALPARGLDHIAENILSYLDAKSLCAAELVCKEWYRVTSDGMLWKKL). Residues 190–228 (DHIAENILSYLDAKSLCAAELVCKEWYRVTSDGMLWKKL) are required for down-regulation of SNAI1. WD repeat units follow at residues 301-338 (ETSK…CKRI), 341-378 (GHTG…MLNT), 381-418 (HHCE…DITL), 424-461 (GHRA…FVRT), 464-503 (GHKR…RVLE), 505-541 (HEEL…DPRA), and 553-590 (EHSG…AAHA).

In terms of assembly, homodimer. Self-associates. Component of the SCF(BTRC) complex, composed of SKP1, CUL1 and BTRC. Direct interaction with SKP1 with SKP1 occurs via the F-box domain. Interacts with phosphorylated ubiquitination substrates SMAD3 and SMAD4. Interacts with phosphorylated ubiquitination substrates CTNNB1, NFKBIA, NFKBIB, NFKBIE, NFKB1/nuclear factor NF-kappa-B p105 subunit, ATF4, CDC25A, DLG1, FBXO5 and SNAI1; the interaction requires the phosphorylation of the 2 serine residues in the substrate destruction motif D-S-G-X(2,3,4)-S. Binds UBQLN1. Interacts with CDC34 and UBE2R2. Interacts with FBXW11. Interacts with CUL4A and DDB1. Part of a SCF(BTRC)-like complex lacking CUL1, which is associated with phosphorylated NKBIA and RELA; RELA interacts directly with NFKBIA. Interacts with the phosphorylated form of GLI3. Interacts with CLU. Interacts with PER1 (phosphorylated), PER2 (phosphorylated) and PER3. Interacts with phosphorylated ubiquitination substrate CEP68. Interacts with ZC3H12A; this interaction occurs when ZC3H12A is phosphorylated in a IKBKB/IKKB-dependent manner. Interacts with HSF1; this interaction occurs during mitosis and induces HSF1 ubiquitin-dependent degradation, a process inhibited by CDC20. Interacts with NFE2L1. Interacts with INAVA. Interacts with IL10RA; this interaction leads to IL10RA ubiquitination and subsequent degradation. Interacts with REST. Interacts with KLF4; this interaction leads to KLF4 ubiquitination and subsequent degradation. Interacts with UBR2, as part of a SCF(BTRC) complex; the interaction mediates 'Lys-48'-linked ubiquitination of UBR2 and is regulated by DUSP22 in the T-cell receptor signaling pathway. Post-translationally, ubiquitinated via 'Lys-11'-linked polyubiquitin by some cullin-5-RING E3 ubiquitin-protein ligase complex (ECS complex), leading to its degradation. Deubiquitinated by OTUD5, promoting its stability. In terms of tissue distribution, expressed in heart, brain, liver, skeletal muscle and, most strongly, in testis.

It is found in the cytoplasm. Its subcellular location is the nucleus. Its pathway is protein modification; protein ubiquitination. Its function is as follows. Substrate recognition component of a SCF (SKP1-CUL1-F-box protein) E3 ubiquitin-protein ligase complex which mediates the ubiquitination and subsequent proteasomal degradation of target proteins. Recognizes and binds to phosphorylated target proteins. SCF(BTRC) mediates the ubiquitination of phosphorylated NFKB, ATF4, CDC25A, DLG1, FBXO5, PER1, SMAD3, SMAD4, SNAI1 and probably NFKB2. SCF(BTRC) mediates the ubiquitination of CTNNB1 and participates in Wnt signaling. SCF(BTRC) mediates the ubiquitination of NFKBIA, NFKBIB and NFKBIE; the degradation frees the associated NFKB1 to translocate into the nucleus and to activate transcription. Ubiquitination of NFKBIA occurs at 'Lys-21' and 'Lys-22'. The SCF(FBXW11) complex also regulates NF-kappa-B by mediating ubiquitination of phosphorylated NFKB1: specifically ubiquitinates the p105 form of NFKB1, leading to its degradation. SCF(BTRC) mediates the ubiquitination of CEP68; this is required for centriole separation during mitosis. SCF(BTRC) mediates the ubiquitination and subsequent degradation of nuclear NFE2L1. Has an essential role in the control of the clock-dependent transcription via degradation of phosphorylated PER1 and PER2. May be involved in ubiquitination and subsequent proteasomal degradation through a DBB1-CUL4 E3 ubiquitin-protein ligase. Required for activation of NFKB-mediated transcription by IL1B, MAP3K14, MAP3K1, IKBKB and TNF. Required for proteolytic processing of GLI3. Mediates ubiquitination of REST, thereby leading to its proteasomal degradation. SCF(BTRC) mediates the ubiquitination and subsequent proteasomal degradation of KLF4; thereby negatively regulating cell pluripotency maintenance and embryogenesis. SCF(BTRC) acts as a regulator of mTORC1 signaling pathway by catalyzing ubiquitination and subsequent proteasomal degradation of phosphorylated DEPTOR, TFE3 and MITF. SCF(BTRC) directs 'Lys-48'-linked ubiquitination of UBR2 in the T-cell receptor signaling pathway. In Mus musculus (Mouse), this protein is F-box/WD repeat-containing protein 1A.